The sequence spans 134 residues: Probable glycine cleavage system H protein (134 aa).

Residues 29-110 (TVLVGITDYA…PYEAWIAKIK (82 aa)) enclose the Lipoyl-binding domain. Lys70 carries the N6-lipoyllysine modification.

The protein belongs to the GcvH family. In terms of assembly, the glycine cleavage system is composed of four proteins: P, T, L and H. The cofactor is (R)-lipoate.

Functionally, the glycine cleavage system catalyzes the degradation of glycine. The H protein shuttles the methylamine group of glycine from the P protein to the T protein. This is Probable glycine cleavage system H protein from Pyrococcus furiosus (strain ATCC 43587 / DSM 3638 / JCM 8422 / Vc1).